The chain runs to 479 residues: (R)-1-hydroxy-2-aminoethylphosphonate ammonia-lyase (479 aa).

N6-(pyridoxal phosphate)lysine is present on K317.

Belongs to the class-III pyridoxal-phosphate-dependent aminotransferase family. The cofactor is pyridoxal 5'-phosphate.

The catalysed reaction is (1R)-(2-amino-1-hydroxyethyl)phosphonate = phosphonoacetaldehyde + NH4(+). Functionally, involved in phosphonate degradation. Functions as a lyase that catalyzes an elimination reaction on the naturally occurring compound (R)-1-hydroxy-2-aminoethylphosphonate ((R)-HAEP), releasing ammonia and generating phosphonoacetaldehyde (PAA), which can be then hydrolyzed by PhnX, encoded by an adjacent gene. Thus, catalyzes a reaction that serves to funnel (R)-HAEP into the hydrolytic pathway for aminoethylphosphonate (AEP, the most common biogenic phosphonate) degradation, expanding the scope and the usefulness of the pathway itself. Is not active toward the (S) enantiomer of HAEP or other HAEP-related compounds such as ethanolamine and D,L-isoserine, indicating a very high substrate specificity. The sequence is that of (R)-1-hydroxy-2-aminoethylphosphonate ammonia-lyase from Vibrio splendidus (strain 12B01).